The sequence spans 228 residues: Urease accessory protein UreE (228 aa).

Positions 193–228 (HGSGLHIHGIHSHGDGHSHSHDDHDHDHNHDHDHKH) are disordered. Over residues 204–228 (SHGDGHSHSHDDHDHDHNHDHDHKH) the composition is skewed to basic and acidic residues.

This sequence belongs to the UreE family.

It localises to the cytoplasm. In terms of biological role, involved in urease metallocenter assembly. Binds nickel. Probably functions as a nickel donor during metallocenter assembly. The polypeptide is Urease accessory protein UreE (Yersinia rohdei).